The primary structure comprises 102 residues: MTQTARVKLTSTSLPKLDGVCGEIMGIGKKTGVKVKGPTPLPVKRLHVATRKSPCGNGTETYEKWEMKMHRRIININADDKAIRQLMRLKIPDDVYIELSLT.

Belongs to the universal ribosomal protein uS10 family. As to quaternary structure, part of the 30S ribosomal subunit.

Involved in the binding of tRNA to the ribosomes. This is Small ribosomal subunit protein uS10 from Nitrosopumilus maritimus (strain SCM1).